A 1712-amino-acid chain; its full sequence is Latent-transforming growth factor beta-binding protein 1 (1712 aa).

The first 20 residues, Met-1–Ser-20, serve as a signal peptide directing secretion. The segment at Ser-63 to Arg-148 is disordered. Over residues Lys-136–Ser-147 the composition is skewed to polar residues. In terms of domain architecture, EGF-like 1 spans Thr-181 to Glu-213. 3 disulfide bridges follow: Cys-185-Cys-195, Cys-189-Cys-201, and Cys-203-Cys-212. Residues Asn-339 and Asn-370 are each glycosylated (N-linked (GlcNAc...) asparagine). Residues Arg-391–Gln-423 enclose the EGF-like 2 domain. 6 disulfide bridges follow: Cys-395–Cys-405, Cys-399–Cys-411, Cys-413–Cys-422, Cys-551–Cys-573, Cys-560–Cys-586, and Cys-574–Cys-589. Residue Asn-416 is glycosylated (N-linked (GlcNAc...) asparagine). Residues Gly-549–Met-601 form the TB 1 domain. N-linked (GlcNAc...) asparagine glycosylation occurs at Asn-612. One can recognise an EGF-like 3; calcium-binding domain in the interval Asp-618–Val-658. 7 disulfide bridges follow: Cys-622–Cys-633, Cys-628–Cys-642, Cys-644–Cys-657, Cys-671–Cys-694, Cys-681–Cys-706, Cys-695–Cys-709, and Cys-696–Cys-721. O-linked (Glc) serine glycosylation occurs at Ser-639. The TB 2 domain occupies Gly-669–Cys-721. The disordered stretch occupies residues Lys-752–Leu-803. O-linked (GalNAc...) threonine glycosylation is found at Thr-761 and Thr-793. Residues Glu-865–Ile-906 form the EGF-like 4; calcium-binding domain. 37 disulfide bridges follow: Cys-869–Cys-881, Cys-876–Cys-890, Cys-892–Cys-905, Cys-911–Cys-923, Cys-918–Cys-932, Cys-934–Cys-947, Cys-953–Cys-964, Cys-959–Cys-973, Cys-976–Cys-988, Cys-994–Cys-1005, Cys-1000–Cys-1014, Cys-1017–Cys-1028, Cys-1034–Cys-1045, Cys-1040–Cys-1054, Cys-1056–Cys-1069, Cys-1075–Cys-1086, Cys-1081–Cys-1095, Cys-1097–Cys-1110, Cys-1116–Cys-1127, Cys-1122–Cys-1136, Cys-1138–Cys-1151, Cys-1157–Cys-1169, Cys-1164–Cys-1178, Cys-1180–Cys-1192, Cys-1198–Cys-1210, Cys-1204–Cys-1219, Cys-1221–Cys-1234, Cys-1240–Cys-1252, Cys-1246–Cys-1261, Cys-1263–Cys-1276, Cys-1282–Cys-1294, Cys-1289–Cys-1303, Cys-1305–Cys-1319, Cys-1340–Cys-1363, Cys-1350–Cys-1375, Cys-1364–Cys-1380, and Cys-1365–Cys-1392. The 42-residue stretch at Asp-907–Ile-948 folds into the EGF-like 5; calcium-binding domain. A glycan (O-linked (Glc) serine) is linked at Ser-929. Residues Asp-949–Glu-989 enclose the EGF-like 6; calcium-binding domain. (3R)-3-hydroxyasparagine is present on Asn-966. The EGF-like 7; calcium-binding domain occupies Asp-990–Leu-1029. O-linked (Glc) serine glycosylation occurs at Ser-1011. The 41-residue stretch at Asp-1030–Gln-1070 folds into the EGF-like 8; calcium-binding domain. The N-linked (GlcNAc...) asparagine glycan is linked to Asn-1042. Ser-1051 is a glycosylation site (O-linked (Glc) serine). Positions Asp-1071–Glu-1111 constitute an EGF-like 9; calcium-binding domain. Residues Asp-1112–Glu-1152 enclose the EGF-like 10; calcium-binding domain. Asn-1129 carries the (3R)-3-hydroxyasparagine modification. An O-linked (Glc) serine glycan is attached at Ser-1133. Residues Asp-1153–Gln-1193 form the EGF-like 11; calcium-binding domain. Residues Asp-1194–Glu-1235 form the EGF-like 12; calcium-binding domain. The O-linked (Glc) serine glycan is linked to Ser-1216. One can recognise an EGF-like 13; calcium-binding domain in the interval Asp-1236–Val-1277. Residue Asn-1242 is glycosylated (N-linked (GlcNAc...) asparagine). Positions Asp-1278–Arg-1320 constitute an EGF-like 14; calcium-binding domain. The tract at residues Glu-1335–Gly-1402 is 8-Cys3 region. The region spanning Lys-1338–Cys-1392 is the TB 3 domain. Residue Asn-1357 is glycosylated (N-linked (GlcNAc...) asparagine). Ser-1405 is subject to Phosphoserine. An EGF-like 15; calcium-binding domain is found at Asp-1415–Phe-1457. Intrachain disulfides connect Cys-1419/Cys-1432, Cys-1427/Cys-1441, Cys-1443/Cys-1456, Cys-1462/Cys-1473, Cys-1468/Cys-1482, Cys-1484/Cys-1497, Cys-1517/Cys-1541, Cys-1527/Cys-1553, Cys-1542/Cys-1556, and Cys-1543/Cys-1568. Residues Asp-1458–Val-1498 form the EGF-like 16; calcium-binding domain. The O-linked (Glc) serine glycan is linked to Ser-1479. The tract at residues Val-1498 to Glu-1712 is C-terminal domain. In terms of domain architecture, TB 4 spans Asp-1515–Cys-1568. Phosphoserine occurs at positions 1588 and 1607. Positions Gln-1612–Val-1652 constitute an EGF-like 17 domain. Disulfide bonds link Cys-1616–Cys-1627, Cys-1622–Cys-1636, Cys-1638–Cys-1651, Cys-1657–Cys-1672, Cys-1667–Cys-1681, and Cys-1683–Cys-1696. Residues Asp-1653–Thr-1697 form the EGF-like 18; calcium-binding domain. O-linked (Glc) serine glycosylation is present at Ser-1678.

Belongs to the LTBP family. As to quaternary structure, interacts with TGFB1; associates via disulfide bonds with the Latency-associated peptide chain (LAP) regulatory chain of TGFB1, leading to regulate activation of TGF-beta-1. LTBP1 does not bind directly to TGF-beta-1, the active chain of TGFB1. Interacts (via C-terminal domain) with FBN1 (via N-terminal domain). Interacts with FBN2. Interacts with ADAMTSL2. Interacts with EFEMP2. In terms of processing, contains hydroxylated asparagine residues. Two intrachain disulfide bonds from the TB3 domain are rearranged upon TGFB1 binding, and form interchain bonds with TGFB1 propeptide, anchoring it to the extracellular matrix. Post-translationally, O-glycosylated on serine residues by POGLUT2 and POGLUT3.

The protein localises to the secreted. The protein resides in the extracellular space. Its subcellular location is the extracellular matrix. Key regulator of transforming growth factor beta (TGFB1, TGFB2 and TGFB3) that controls TGF-beta activation by maintaining it in a latent state during storage in extracellular space. Associates specifically via disulfide bonds with the Latency-associated peptide (LAP), which is the regulatory chain of TGF-beta, and regulates integrin-dependent activation of TGF-beta. Outcompeted by LRRC32/GARP for binding to LAP regulatory chain of TGF-beta. The polypeptide is Latent-transforming growth factor beta-binding protein 1 (Ltbp1) (Rattus norvegicus (Rat)).